Consider the following 137-residue polypeptide: MLQPKRTKFRKTHKGRNRGLANSGNEVSFGTFGLKATSRGQLTARQIEAARRAMTRHVKRQGKIWIRVFPDKPITEKPLEVRMGKGKGNVEYWVCPIQPGKVLYEMDGVPEALAREAFALAAAKLSVQTTFVIKTVM.

The span at 1 to 17 (MLQPKRTKFRKTHKGRN) shows a compositional bias: basic residues. The tract at residues 1–24 (MLQPKRTKFRKTHKGRNRGLANSG) is disordered.

Belongs to the universal ribosomal protein uL16 family. In terms of assembly, part of the 50S ribosomal subunit.

In terms of biological role, binds 23S rRNA and is also seen to make contacts with the A and possibly P site tRNAs. This Aeromonas hydrophila subsp. hydrophila (strain ATCC 7966 / DSM 30187 / BCRC 13018 / CCUG 14551 / JCM 1027 / KCTC 2358 / NCIMB 9240 / NCTC 8049) protein is Large ribosomal subunit protein uL16.